We begin with the raw amino-acid sequence, 77 residues long: Dermaseptin-B9 (77 aa).

An N-terminal signal peptide occupies residues 1 to 22 (MAFLKKSLFLVLFLGLVSLSVC). 2 consecutive propeptides follow at residues 23–43 (EEEK…QSEE) and 76–77 (EQ).

This sequence belongs to the frog skin active peptide (FSAP) family. Dermaseptin subfamily. As to expression, expressed by the skin glands.

It is found in the secreted. Its function is as follows. Has antimicrobial activity. Exhibits a bactericidal activity towards several species of mollicutes, firmicutes and gracilicutes. This peptide is membranotropic and it efficiently depolarizes the plasma membrane. The chain is Dermaseptin-B9 (DRG3) from Phyllomedusa bicolor (Two-colored leaf frog).